The following is a 449-amino-acid chain: Adenylyltransferase and sulfurtransferase MOCS3 (449 aa).

Residues G96, D117, 124-128, K141, and 185-186 contribute to the ATP site; these read SNLHR and DN. 2 residues coordinate Zn(2+): C227 and C230. The Glycyl thioester intermediate; for adenylyltransferase activity role is filled by C244. Zn(2+) is bound by residues C302 and C305. The Rhodanese domain maps to 351-447; that stretch reads QDKPHLLLDV…WTNQIDENFP (97 aa). C406 serves as the catalytic Cysteine persulfide intermediate; for sulfurtransferase activity.

This sequence in the N-terminal section; belongs to the HesA/MoeB/ThiF family. UBA4 subfamily. Zn(2+) serves as cofactor.

The protein localises to the cytoplasm. The protein resides in the cytosol. It carries out the reaction [molybdopterin-synthase sulfur-carrier protein]-C-terminal Gly-Gly + ATP + H(+) = [molybdopterin-synthase sulfur-carrier protein]-C-terminal Gly-Gly-AMP + diphosphate. The enzyme catalyses [molybdopterin-synthase sulfur-carrier protein]-C-terminal Gly-Gly-AMP + S-sulfanyl-L-cysteinyl-[cysteine desulfurase] + AH2 = [molybdopterin-synthase sulfur-carrier protein]-C-terminal-Gly-aminoethanethioate + L-cysteinyl-[cysteine desulfurase] + A + AMP + 2 H(+). Its pathway is tRNA modification; 5-methoxycarbonylmethyl-2-thiouridine-tRNA biosynthesis. It participates in cofactor biosynthesis; molybdopterin biosynthesis. Its function is as follows. Plays a central role in 2-thiolation of mcm(5)S(2)U at tRNA wobble positions of cytosolic tRNA(Lys), tRNA(Glu) and tRNA(Gln). Also essential during biosynthesis of the molybdenum cofactor. Acts by mediating the C-terminal thiocarboxylation of sulfur carriers URM1 and MOCS2A. Its N-terminus first activates URM1 and MOCS2A as acyl-adenylates (-COAMP), then the persulfide sulfur on the catalytic cysteine is transferred to URM1 and MOCS2A to form thiocarboxylation (-COSH) of their C-terminus. The reaction probably involves hydrogen sulfide that is generated from the persulfide intermediate and that acts as a nucleophile towards URM1 and MOCS2A. Subsequently, a transient disulfide bond is formed. Does not use thiosulfate as sulfur donor; NFS1 probably acting as a sulfur donor for thiocarboxylation reactions. This is Adenylyltransferase and sulfurtransferase MOCS3 from Drosophila grimshawi (Hawaiian fruit fly).